The sequence spans 100 residues: Small ribosomal subunit protein uS14c (100 aa).

Belongs to the universal ribosomal protein uS14 family. As to quaternary structure, part of the 30S ribosomal subunit.

The protein localises to the plastid. It localises to the chloroplast. Binds 16S rRNA, required for the assembly of 30S particles. This chain is Small ribosomal subunit protein uS14c, found in Aethionema cordifolium (Lebanon stonecress).